A 225-amino-acid polypeptide reads, in one-letter code: Phosphoglycolate phosphatase (225 aa).

Aspartate 11 (nucleophile) is an active-site residue. Mg(2+) contacts are provided by aspartate 11, aspartate 13, and aspartate 174.

This sequence belongs to the HAD-like hydrolase superfamily. CbbY/CbbZ/Gph/YieH family. Mg(2+) is required as a cofactor.

The catalysed reaction is 2-phosphoglycolate + H2O = glycolate + phosphate. It functions in the pathway organic acid metabolism; glycolate biosynthesis; glycolate from 2-phosphoglycolate: step 1/1. Its function is as follows. Specifically catalyzes the dephosphorylation of 2-phosphoglycolate. Is involved in the dissimilation of the intracellular 2-phosphoglycolate formed during the DNA repair of 3'-phosphoglycolate ends, a major class of DNA lesions induced by oxidative stress. This chain is Phosphoglycolate phosphatase, found in Nitrosococcus oceani (strain ATCC 19707 / BCRC 17464 / JCM 30415 / NCIMB 11848 / C-107).